Consider the following 626-residue polypeptide: tRNA 5-methylaminomethyl-2-thiouridine biosynthesis bifunctional protein MnmC (626 aa).

Residues Met-1–Gln-237 form a tRNA (mnm(5)s(2)U34)-methyltransferase region. Residues Ile-255–Glu-626 form an FAD-dependent cmnm(5)s(2)U34 oxidoreductase region.

It in the N-terminal section; belongs to the methyltransferase superfamily. tRNA (mnm(5)s(2)U34)-methyltransferase family. The protein in the C-terminal section; belongs to the DAO family. It depends on FAD as a cofactor.

The protein resides in the cytoplasm. The enzyme catalyses 5-aminomethyl-2-thiouridine(34) in tRNA + S-adenosyl-L-methionine = 5-methylaminomethyl-2-thiouridine(34) in tRNA + S-adenosyl-L-homocysteine + H(+). In terms of biological role, catalyzes the last two steps in the biosynthesis of 5-methylaminomethyl-2-thiouridine (mnm(5)s(2)U) at the wobble position (U34) in tRNA. Catalyzes the FAD-dependent demodification of cmnm(5)s(2)U34 to nm(5)s(2)U34, followed by the transfer of a methyl group from S-adenosyl-L-methionine to nm(5)s(2)U34, to form mnm(5)s(2)U34. The sequence is that of tRNA 5-methylaminomethyl-2-thiouridine biosynthesis bifunctional protein MnmC from Hahella chejuensis (strain KCTC 2396).